The primary structure comprises 188 residues: ATP synthase subunit b 1 (188 aa).

The helical transmembrane segment at 7-27 threads the bilayer; it reads LSVLALAMLAANPAFAAGGGI.

Belongs to the ATPase B chain family. In terms of assembly, F-type ATPases have 2 components, F(1) - the catalytic core - and F(0) - the membrane proton channel. F(1) has five subunits: alpha(3), beta(3), gamma(1), delta(1), epsilon(1). F(0) has three main subunits: a(1), b(2) and c(10-14). The alpha and beta chains form an alternating ring which encloses part of the gamma chain. F(1) is attached to F(0) by a central stalk formed by the gamma and epsilon chains, while a peripheral stalk is formed by the delta and b chains.

It is found in the cell inner membrane. Its function is as follows. F(1)F(0) ATP synthase produces ATP from ADP in the presence of a proton or sodium gradient. F-type ATPases consist of two structural domains, F(1) containing the extramembraneous catalytic core and F(0) containing the membrane proton channel, linked together by a central stalk and a peripheral stalk. During catalysis, ATP synthesis in the catalytic domain of F(1) is coupled via a rotary mechanism of the central stalk subunits to proton translocation. Functionally, component of the F(0) channel, it forms part of the peripheral stalk, linking F(1) to F(0). The chain is ATP synthase subunit b 1 from Roseobacter denitrificans (strain ATCC 33942 / OCh 114) (Erythrobacter sp. (strain OCh 114)).